A 201-amino-acid chain; its full sequence is Imidazole glycerol phosphate synthase subunit HisH 1 (201 aa).

One can recognise a Glutamine amidotransferase type-1 domain in the interval 1–201 (MIALIDYKAG…LKLLENFARL (201 aa)). Cys80 functions as the Nucleophile in the catalytic mechanism. Active-site residues include His183 and Glu185.

Heterodimer of HisH and HisF.

It localises to the cytoplasm. The catalysed reaction is 5-[(5-phospho-1-deoxy-D-ribulos-1-ylimino)methylamino]-1-(5-phospho-beta-D-ribosyl)imidazole-4-carboxamide + L-glutamine = D-erythro-1-(imidazol-4-yl)glycerol 3-phosphate + 5-amino-1-(5-phospho-beta-D-ribosyl)imidazole-4-carboxamide + L-glutamate + H(+). It catalyses the reaction L-glutamine + H2O = L-glutamate + NH4(+). It functions in the pathway amino-acid biosynthesis; L-histidine biosynthesis; L-histidine from 5-phospho-alpha-D-ribose 1-diphosphate: step 5/9. In terms of biological role, IGPS catalyzes the conversion of PRFAR and glutamine to IGP, AICAR and glutamate. The HisH subunit provides the glutamine amidotransferase activity that produces the ammonia necessary to HisF for the synthesis of IGP and AICAR. In Campylobacter jejuni subsp. jejuni serotype O:23/36 (strain 81-176), this protein is Imidazole glycerol phosphate synthase subunit HisH 1 (hisH1).